The following is a 173-amino-acid chain: Large ribosomal subunit protein uL5 (173 aa).

This sequence belongs to the universal ribosomal protein uL5 family. In terms of assembly, part of the 50S ribosomal subunit; contacts the 5S rRNA and probably tRNA. Forms a bridge to the 30S subunit in the 70S ribosome.

Functionally, this is one of the proteins that bind and probably mediate the attachment of the 5S RNA into the large ribosomal subunit, where it forms part of the central protuberance. In the 70S ribosome it contacts protein S13 of the 30S subunit (bridge B1b), connecting the 2 subunits; this bridge is implicated in subunit movement. May contact the P site tRNA; the 5S rRNA and some of its associated proteins might help stabilize positioning of ribosome-bound tRNAs. The sequence is that of Large ribosomal subunit protein uL5 from Nitrosopumilus maritimus (strain SCM1).